The chain runs to 244 residues: WUSCHEL-related homeobox 3 (244 aa).

Residues 4–68 (VASTRWCPTP…NHKARDRQKL (65 aa)) constitute a DNA-binding region (homeobox; WUS-type).

The protein belongs to the WUS homeobox family. Expressed in aerial parts of seedlings, inflorescences and flowers at low level. Expressed in a restricted number of L1 cells at the lateral regions of flower primordia.

It localises to the nucleus. Probable transcription factor required to initiate organ founder cells in a lateral domain of shoot meristems. Involved in the lateral sepal axis-dependent development of flowers, probably by regulating the proliferation of L1 cells at the lateral region of flower primordia. Required for the formation of the margin cells of the first and second whorl organs. The polypeptide is WUSCHEL-related homeobox 3 (WOX3) (Arabidopsis thaliana (Mouse-ear cress)).